Consider the following 210-residue polypeptide: MSILLVTSSPRGAASHSTRIATEFAEKLLAADPSNTLVVRDLVANPLPHIDADYATGIYTPVEARTPRQAEVVGVSDVVLDELFAADTVILATGFINFNISSTLKSWVDHIARSGRSFAYGENGPKGLVTGKKVYIVLASGGIYSEGAAVQFDHAIPYLRGVLGFLGMTDVDVIRIEGVGMGPDAVTAALAKATAKVDAVVASQQAAAAA.

FMN-binding positions include Ser-9 and 15 to 17; that span reads SHS.

The protein belongs to the azoreductase type 1 family. In terms of assembly, homodimer. FMN is required as a cofactor.

It carries out the reaction 2 a quinone + NADH + H(+) = 2 a 1,4-benzosemiquinone + NAD(+). It catalyses the reaction N,N-dimethyl-1,4-phenylenediamine + anthranilate + 2 NAD(+) = 2-(4-dimethylaminophenyl)diazenylbenzoate + 2 NADH + 2 H(+). In terms of biological role, quinone reductase that provides resistance to thiol-specific stress caused by electrophilic quinones. Its function is as follows. Also exhibits azoreductase activity. Catalyzes the reductive cleavage of the azo bond in aromatic azo compounds to the corresponding amines. The protein is FMN-dependent NADH:quinone oxidoreductase of Mesorhizobium japonicum (strain LMG 29417 / CECT 9101 / MAFF 303099) (Mesorhizobium loti (strain MAFF 303099)).